The primary structure comprises 668 residues: tRNA 5-methylaminomethyl-2-thiouridine biosynthesis bifunctional protein MnmC (668 aa).

Residues 1-245 form a tRNA (mnm(5)s(2)U34)-methyltransferase region; it reads MKHYSIQPAN…KREMLCGVME (245 aa). Residues 270-668 form an FAD-dependent cmnm(5)s(2)U34 oxidoreductase region; it reads IGGGIASALL…LLKGKAVKAG (399 aa).

This sequence in the N-terminal section; belongs to the methyltransferase superfamily. tRNA (mnm(5)s(2)U34)-methyltransferase family. The protein in the C-terminal section; belongs to the DAO family. It depends on FAD as a cofactor.

The protein resides in the cytoplasm. The catalysed reaction is 5-aminomethyl-2-thiouridine(34) in tRNA + S-adenosyl-L-methionine = 5-methylaminomethyl-2-thiouridine(34) in tRNA + S-adenosyl-L-homocysteine + H(+). In terms of biological role, catalyzes the last two steps in the biosynthesis of 5-methylaminomethyl-2-thiouridine (mnm(5)s(2)U) at the wobble position (U34) in tRNA. Catalyzes the FAD-dependent demodification of cmnm(5)s(2)U34 to nm(5)s(2)U34, followed by the transfer of a methyl group from S-adenosyl-L-methionine to nm(5)s(2)U34, to form mnm(5)s(2)U34. This chain is tRNA 5-methylaminomethyl-2-thiouridine biosynthesis bifunctional protein MnmC, found in Escherichia coli O9:H4 (strain HS).